We begin with the raw amino-acid sequence, 242 residues long: uncharacterized protein (242 aa).

The next 2 helical transmembrane spans lie at 4-24 (NYQVSLIFSVIYVVTNSYYVV) and 34-54 (LLFGSFYLTMEVFQTLQWLFG). A glycan (N-linked (GlcNAc...) asparagine; by host) is linked at Asn73. The next 3 helical transmembrane spans lie at 74 to 94 (YTIVAFILIWLQPILFSVIGY), 106 to 126 (VLTVLNCFVFFYGLKLLYGGF), and 162 to 182 (LDVFPNHLTYIILCIISFVMY). Asn185 is a glycosylation site (N-linked (GlcNAc...) asparagine; by host). 2 helical membrane passes run 189 to 209 (VIGLGWLLSLIVTKLLLAPTL) and 217 to 237 (CLLSIIANLLIVAYVHISTGI).

The protein localises to the membrane. This is an uncharacterized protein from Acanthamoeba polyphaga mimivirus (APMV).